A 208-amino-acid chain; its full sequence is Superoxide dismutase [Mn] 2 (208 aa).

Residues H28, H83, D165, and H169 each contribute to the Mn(2+) site.

It belongs to the iron/manganese superoxide dismutase family. In terms of assembly, homodimer. It depends on Mn(2+) as a cofactor.

The catalysed reaction is 2 superoxide + 2 H(+) = H2O2 + O2. Functionally, destroys superoxide anion radicals which are normally produced within the cells and which are toxic to biological systems. The chain is Superoxide dismutase [Mn] 2 (sodA2) from Bacillus anthracis.